A 132-amino-acid chain; its full sequence is Large ribosomal subunit protein uL14 (132 aa).

It belongs to the universal ribosomal protein uL14 family. Part of the 50S ribosomal subunit. Forms a cluster with proteins L3 and L24e, part of which may contact the 16S rRNA in 2 intersubunit bridges.

In terms of biological role, binds to 23S rRNA. Forms part of two intersubunit bridges in the 70S ribosome. In Methanosphaera stadtmanae (strain ATCC 43021 / DSM 3091 / JCM 11832 / MCB-3), this protein is Large ribosomal subunit protein uL14.